Consider the following 487-residue polypeptide: NGFI-A-binding protein 1 (487 aa).

Residues 4-82 (ALPRTLGELQ…RDWVTNPGLF (79 aa)) form an NCD1 region. Residues Lys-126, Lys-129, and Lys-143 each participate in a glycyl lysine isopeptide (Lys-Gly) (interchain with G-Cter in SUMO2) cross-link. The segment at 162-188 (QGHHATESEHSLSPADLGSPASPKESS) is disordered. Phosphoserine occurs at positions 172 and 183. Lys-212 participates in a covalent cross-link: Glycyl lysine isopeptide (Lys-Gly) (interchain with G-Cter in SUMO2). Residues 221-310 (LLKTNKKLAK…ARQISREVTY (90 aa)) form an NCD2 region. The necessary for nuclear localization stretch occupies residues 307-338 (EVTYKYTYRTTKSKCGERDELSPKRIKVEDGF). At Ser-328 the chain carries Phosphoserine. Lys-333 participates in a covalent cross-link: Glycyl lysine isopeptide (Lys-Gly) (interchain with G-Cter in SUMO1); alternate. A Glycyl lysine isopeptide (Lys-Gly) (interchain with G-Cter in SUMO2); alternate cross-link involves residue Lys-333. Glycyl lysine isopeptide (Lys-Gly) (interchain with G-Cter in SUMO2) cross-links involve residues Lys-355, Lys-369, and Lys-373. The interval 399 to 434 (YRQSSEEHSPNGLTSDNSDGQGERPLNLRMPNLQNR) is disordered. At Ser-407 the chain carries Phosphoserine. A compositionally biased stretch (polar residues) spans 409 to 418 (NGLTSDNSDG). Glycyl lysine isopeptide (Lys-Gly) (interchain with G-Cter in SUMO2) cross-links involve residues Lys-454, Lys-465, and Lys-477. Lys-480 is covalently cross-linked (Glycyl lysine isopeptide (Lys-Gly) (interchain with G-Cter in SUMO1); alternate). Lys-480 participates in a covalent cross-link: Glycyl lysine isopeptide (Lys-Gly) (interchain with G-Cter in SUMO2); alternate.

Belongs to the NAB family. As to quaternary structure, homomultimers may associate with EGR1 bound to DNA. In terms of tissue distribution, isoform Short is found in myeloid leukemia cell line KG-1.

The protein localises to the nucleus. Acts as a transcriptional repressor for zinc finger transcription factors EGR1 and EGR2. The chain is NGFI-A-binding protein 1 (NAB1) from Homo sapiens (Human).